The sequence spans 192 residues: Ribosomal RNA small subunit methyltransferase G (192 aa).

Residues glycine 63, leucine 68, 112 to 113, and arginine 125 each bind S-adenosyl-L-methionine; that span reads IE.

Belongs to the methyltransferase superfamily. RNA methyltransferase RsmG family.

It localises to the cytoplasm. It catalyses the reaction guanosine(527) in 16S rRNA + S-adenosyl-L-methionine = N(7)-methylguanosine(527) in 16S rRNA + S-adenosyl-L-homocysteine. In terms of biological role, specifically methylates the N7 position of guanine in position 527 of 16S rRNA. In Rickettsia rickettsii (strain Iowa), this protein is Ribosomal RNA small subunit methyltransferase G.